Here is a 600-residue protein sequence, read N- to C-terminus: DNA ligase (600 aa).

ATP is bound at residue Asp259. The active-site N6-AMP-lysine intermediate is Lys261. ATP contacts are provided by Arg266, Arg281, Glu311, Phe351, Arg428, and Lys434.

The protein belongs to the ATP-dependent DNA ligase family. It depends on Mg(2+) as a cofactor.

The enzyme catalyses ATP + (deoxyribonucleotide)n-3'-hydroxyl + 5'-phospho-(deoxyribonucleotide)m = (deoxyribonucleotide)n+m + AMP + diphosphate.. Functionally, DNA ligase that seals nicks in double-stranded DNA during DNA replication, DNA recombination and DNA repair. In Acidianus ambivalens (Desulfurolobus ambivalens), this protein is DNA ligase.